Reading from the N-terminus, the 343-residue chain is Putative kinase HI_0665 (343 aa).

Residue Asp209 is the Proton acceptor of the active site.

It belongs to the HipA Ser/Thr kinase family.

The protein is Putative kinase HI_0665 of Haemophilus influenzae (strain ATCC 51907 / DSM 11121 / KW20 / Rd).